The chain runs to 151 residues: MAERTFIAIKPDGVQRGLVGEILGRFERKGFKLVGLKQITPSRALAEQHYGVHKERPFFAGLVDFITSGPVVAMVWEGDGVIASARKLIGATKPLEAEPGTIRGDLAVNIGRNVIHGSDAAETAQFEIGLWFQASELNDWSPSDQGWRVEG.

Residues K10, F58, R86, T92, R103, and N113 each contribute to the ATP site. H116 functions as the Pros-phosphohistidine intermediate in the catalytic mechanism.

The protein belongs to the NDK family. As to quaternary structure, homotetramer. Mg(2+) serves as cofactor.

The protein localises to the cytoplasm. It carries out the reaction dZDP + ATP = dZTP + ADP. The enzyme catalyses a 2'-deoxyribonucleoside 5'-diphosphate + ATP = a 2'-deoxyribonucleoside 5'-triphosphate + ADP. It catalyses the reaction a ribonucleoside 5'-diphosphate + ATP = a ribonucleoside 5'-triphosphate + ADP. It participates in purine metabolism. Major role in the synthesis of nucleoside triphosphates other than ATP. The ATP gamma phosphate is transferred to the NDP beta phosphate via a ping-pong mechanism, using a phosphorylated active-site intermediate. Functionally, (Microbial infection) Catalyzes the phosphorylation of dZDP to dZTP, when the bacterium is infected by a phage that produces the substrate for the synthesis of dZTP (2- amino-2'-deoxyadenosine 5'-triphosphate), which is then used by the phage as a DNA polymerase substrate. In Synechococcus sp. (strain CC9605), this protein is Nucleoside diphosphate kinase.